The primary structure comprises 455 residues: Tubulin alpha-1 chain (455 aa).

Gln11, Glu75, Ser144, Gly148, Thr149, Thr183, Asn210, and Asn232 together coordinate GTP. Mg(2+) is bound at residue Glu75. Glu258 is an active-site residue.

It belongs to the tubulin family. Dimer of alpha and beta chains. A typical microtubule is a hollow water-filled tube with an outer diameter of 25 nm and an inner diameter of 15 nM. Alpha-beta heterodimers associate head-to-tail to form protofilaments running lengthwise along the microtubule wall with the beta-tubulin subunit facing the microtubule plus end conferring a structural polarity. Microtubules usually have 13 protofilaments but different protofilament numbers can be found in some organisms and specialized cells. Mg(2+) is required as a cofactor.

The protein resides in the cytoplasm. The protein localises to the cytoskeleton. The catalysed reaction is GTP + H2O = GDP + phosphate + H(+). Tubulin is the major constituent of microtubules, a cylinder consisting of laterally associated linear protofilaments composed of alpha- and beta-tubulin heterodimers. Microtubules grow by the addition of GTP-tubulin dimers to the microtubule end, where a stabilizing cap forms. Below the cap, tubulin dimers are in GDP-bound state, owing to GTPase activity of alpha-tubulin. This chain is Tubulin alpha-1 chain (nda2), found in Schizosaccharomyces pombe (strain 972 / ATCC 24843) (Fission yeast).